The sequence spans 106 residues: Somatoliberin (106 aa).

An N-terminal signal peptide occupies residues 1 to 19; that stretch reads MLLWVFFLVTLTLSSGSHG. A propeptide spanning residues 20–30 is cleaved from the precursor; that stretch reads SLPSQPLRIPR. Leucine amide is present on Leu74. Positions 77-106 are excised as a propeptide; the sequence is QVDGVWTDQQQMALESTLVSLLQERRNSQG.

This sequence belongs to the glucagon family.

The protein resides in the secreted. In terms of biological role, GRF is released by the hypothalamus and acts on the adenohypophyse to stimulate the secretion of growth hormone. The protein is Somatoliberin (GHRH) of Bos taurus (Bovine).